A 341-amino-acid chain; its full sequence is Protein pelota homolog (341 aa).

It belongs to the eukaryotic release factor 1 family. Pelota subfamily. Monomer. The cofactor is a divalent metal cation.

It is found in the cytoplasm. Its function is as follows. May function in recognizing stalled ribosomes, interact with stem-loop structures in stalled mRNA molecules, and effect endonucleolytic cleavage of the mRNA. May play a role in the release non-functional ribosomes and degradation of damaged mRNAs. Has endoribonuclease activity. This is Protein pelota homolog from Methanospirillum hungatei JF-1 (strain ATCC 27890 / DSM 864 / NBRC 100397 / JF-1).